The primary structure comprises 466 residues: ATP-dependent protease ATPase subunit HslU (466 aa).

ATP-binding positions include isoleucine 18, 60-65 (GVGKTE), aspartate 279, glutamate 344, and arginine 416.

The protein belongs to the ClpX chaperone family. HslU subfamily. As to quaternary structure, a double ring-shaped homohexamer of HslV is capped on each side by a ring-shaped HslU homohexamer. The assembly of the HslU/HslV complex is dependent on binding of ATP.

The protein localises to the cytoplasm. Its function is as follows. ATPase subunit of a proteasome-like degradation complex; this subunit has chaperone activity. The binding of ATP and its subsequent hydrolysis by HslU are essential for unfolding of protein substrates subsequently hydrolyzed by HslV. HslU recognizes the N-terminal part of its protein substrates and unfolds these before they are guided to HslV for hydrolysis. This chain is ATP-dependent protease ATPase subunit HslU, found in Lactobacillus acidophilus (strain ATCC 700396 / NCK56 / N2 / NCFM).